The sequence spans 113 residues: UPF0482 protein YnfB (113 aa).

The signal sequence occupies residues 1 to 28; that stretch reads MKITLSKRIGLLAFLLPCALALSTTVHA.

It belongs to the UPF0482 family.

In Shigella flexneri serotype 5b (strain 8401), this protein is UPF0482 protein YnfB.